The primary structure comprises 189 residues: MRKIGIIGGTFDPPHNGHLLIANEVYHALGLEEVWFLPNQVPPHKQGRNITSVKSRLNMLQIAIEEEAYFSICLEELDREGPSYTYDTMVQLTEKYPDVQFHFIIGGDMVEYLPKWYNIEKLLKLVTFVGVARPGYTLHTPYDIVKVEIPEFAVSSSLLRERYMTKKTCKYLLPEKVQVYIERNGLYES.

The protein belongs to the NadD family.

It carries out the reaction nicotinate beta-D-ribonucleotide + ATP + H(+) = deamido-NAD(+) + diphosphate. It functions in the pathway cofactor biosynthesis; NAD(+) biosynthesis; deamido-NAD(+) from nicotinate D-ribonucleotide: step 1/1. Catalyzes the reversible adenylation of nicotinate mononucleotide (NaMN) to nicotinic acid adenine dinucleotide (NaAD). The sequence is that of Probable nicotinate-nucleotide adenylyltransferase from Bacillus mycoides (strain KBAB4) (Bacillus weihenstephanensis).